A 372-amino-acid polypeptide reads, in one-letter code: tRNA-specific 2-thiouridylase MnmA (372 aa).

ATP-binding positions include 17 to 24 and methionine 43; that span reads GMSGGVDS. Positions 103–105 are interaction with target base in tRNA; the sequence is NPD. Residue cysteine 108 is the Nucleophile of the active site. A disulfide bridge connects residues cysteine 108 and cysteine 207. Glycine 133 serves as a coordination point for ATP. Residues 157-159 form an interaction with tRNA region; sequence KDQ. Residue cysteine 207 is the Cysteine persulfide intermediate of the active site. The interaction with tRNA stretch occupies residues 319-320; the sequence is RY.

Belongs to the MnmA/TRMU family.

Its subcellular location is the cytoplasm. The enzyme catalyses S-sulfanyl-L-cysteinyl-[protein] + uridine(34) in tRNA + AH2 + ATP = 2-thiouridine(34) in tRNA + L-cysteinyl-[protein] + A + AMP + diphosphate + H(+). Functionally, catalyzes the 2-thiolation of uridine at the wobble position (U34) of tRNA, leading to the formation of s(2)U34. This chain is tRNA-specific 2-thiouridylase MnmA, found in Vibrio cholerae serotype O1 (strain ATCC 39541 / Classical Ogawa 395 / O395).